Here is a 104-residue protein sequence, read N- to C-terminus: MILTNTEDVAGHKIIKNLGLVKGNTIRAKHIGKDILAGLRSIVGGEIEEYTQMLDEARNEAIRRMEAEAKEKGANAIICVRFSTSAVMQNASEVMAYGTAVIVE.

The protein belongs to the UPF0145 family.

The protein is UPF0145 protein DET1617 of Dehalococcoides mccartyi (strain ATCC BAA-2266 / KCTC 15142 / 195) (Dehalococcoides ethenogenes (strain 195)).